A 130-amino-acid polypeptide reads, in one-letter code: Small ribosomal subunit protein uS8 (130 aa).

This sequence belongs to the universal ribosomal protein uS8 family. Part of the 30S ribosomal subunit.

In terms of biological role, one of the primary rRNA binding proteins, it binds directly to 16S rRNA central domain where it helps coordinate assembly of the platform of the 30S subunit. The polypeptide is Small ribosomal subunit protein uS8 (Methanobrevibacter smithii (strain ATCC 35061 / DSM 861 / OCM 144 / PS)).